A 312-amino-acid chain; its full sequence is DNA-directed RNA polymerase subunit alpha (312 aa).

An alpha N-terminal domain (alpha-NTD) region spans residues M1 to T229. The tract at residues S241–V312 is alpha C-terminal domain (alpha-CTD).

This sequence belongs to the RNA polymerase alpha chain family. As to quaternary structure, in cyanobacteria the RNAP catalytic core is composed of 2 alpha, 1 beta, 1 beta', 1 gamma and 1 omega subunit. When a sigma factor is associated with the core the holoenzyme is formed, which can initiate transcription.

It catalyses the reaction RNA(n) + a ribonucleoside 5'-triphosphate = RNA(n+1) + diphosphate. DNA-dependent RNA polymerase catalyzes the transcription of DNA into RNA using the four ribonucleoside triphosphates as substrates. This is DNA-directed RNA polymerase subunit alpha from Prochlorococcus marinus (strain MIT 9215).